A 586-amino-acid polypeptide reads, in one-letter code: Phosphomethylpyrimidine synthase (586 aa).

Residues 1–58 (MKQSVSAEQIELKSSLPGSKKVYVDGPREGMKVPMREIEQSDTNGVPNPPIRVYDTSG) are disordered. Over residues 22–39 (VYVDGPREGMKVPMREIE) the composition is skewed to basic and acidic residues. Substrate contacts are provided by residues asparagine 193, methionine 222, tyrosine 251, histidine 287, 307-309 (SRG), 348-351 (DGLR), and glutamate 387. Histidine 391 lines the Zn(2+) pocket. Tyrosine 414 serves as a coordination point for substrate. Residue histidine 455 coordinates Zn(2+). [4Fe-4S] cluster contacts are provided by cysteine 535, cysteine 538, and cysteine 543.

Belongs to the ThiC family. [4Fe-4S] cluster serves as cofactor.

The enzyme catalyses 5-amino-1-(5-phospho-beta-D-ribosyl)imidazole + S-adenosyl-L-methionine = 4-amino-2-methyl-5-(phosphooxymethyl)pyrimidine + CO + 5'-deoxyadenosine + formate + L-methionine + 3 H(+). It participates in cofactor biosynthesis; thiamine diphosphate biosynthesis. Catalyzes the synthesis of the hydroxymethylpyrimidine phosphate (HMP-P) moiety of thiamine from aminoimidazole ribotide (AIR) in a radical S-adenosyl-L-methionine (SAM)-dependent reaction. This Bacillus thuringiensis (strain Al Hakam) protein is Phosphomethylpyrimidine synthase.